We begin with the raw amino-acid sequence, 123 residues long: Small ribosomal subunit protein uS12 (123 aa).

At Asp-89 the chain carries 3-methylthioaspartic acid.

The protein belongs to the universal ribosomal protein uS12 family. In terms of assembly, part of the 30S ribosomal subunit. Contacts proteins S8 and S17. May interact with IF1 in the 30S initiation complex.

With S4 and S5 plays an important role in translational accuracy. Functionally, interacts with and stabilizes bases of the 16S rRNA that are involved in tRNA selection in the A site and with the mRNA backbone. Located at the interface of the 30S and 50S subunits, it traverses the body of the 30S subunit contacting proteins on the other side and probably holding the rRNA structure together. The combined cluster of proteins S8, S12 and S17 appears to hold together the shoulder and platform of the 30S subunit. The polypeptide is Small ribosomal subunit protein uS12 (Bifidobacterium animalis subsp. lactis (strain AD011)).